The following is a 336-amino-acid chain: Methionyl-tRNA formyltransferase (336 aa).

112–115 is a (6S)-5,6,7,8-tetrahydrofolate binding site; sequence SILP.

The protein belongs to the Fmt family.

It catalyses the reaction L-methionyl-tRNA(fMet) + (6R)-10-formyltetrahydrofolate = N-formyl-L-methionyl-tRNA(fMet) + (6S)-5,6,7,8-tetrahydrofolate + H(+). Its function is as follows. Attaches a formyl group to the free amino group of methionyl-tRNA(fMet). The formyl group appears to play a dual role in the initiator identity of N-formylmethionyl-tRNA by promoting its recognition by IF2 and preventing the misappropriation of this tRNA by the elongation apparatus. The protein is Methionyl-tRNA formyltransferase of Trichodesmium erythraeum (strain IMS101).